Reading from the N-terminus, the 441-residue chain is Alpha-monoglucosyldiacylglycerol synthase (441 aa).

The protein belongs to the glycosyltransferase group 1 family. Glycosyltransferase 4 subfamily. The cofactor is Mg(2+).

It is found in the cell membrane. The enzyme catalyses a 1,2-diacyl-sn-glycerol + UDP-alpha-D-glucose = a 1,2-diacyl-3-O-(alpha-D-glucopyranosyl)-sn-glycerol + UDP + H(+). Activated by the negatively charged lipid phosphatidylglycerol (PG). Its function is as follows. Glucosyltransferase involved in the biosynthesis of the non-bilayer-prone membrane lipid alpha-monoglucosyldiacylglycerol. This is a major component for maintaining a certain anionic lipid surface charge density, for balancing the bilayer to non-bilayer phase equilibria and for keeping a constant lipid bilayer spontaneous curvature (curvature packing stress). Catalyzes the transfer of a glucosyl residue from UDP-Glc to diacylglycerol (DAG) acceptor to form the corresponding alpha-glucosyl-DAG (1,2-diacyl-3-O-(alpha-D-glucopyranosyl)-sn-glycerol). It can only use UDP-Glc as sugar donor. The sequence is that of Alpha-monoglucosyldiacylglycerol synthase from Streptococcus pneumoniae (strain ATCC BAA-255 / R6).